The sequence spans 463 residues: MKHAVKHIHFIGIGGVGMSGIAEVLLNLGYAVSGSDLADNAVTQRLAKLGARIHRGHAPSNIAGADAVVTSTAVQESNPEVVAAREKKIPIVPRALMLAELMRLRQGIAIAGTHGKTTTTSLVASILGEAGMDPTYVIGGKLTAAGTNARLGQGDFLVAEADESDASFLYLTPVIAIVTNIDADHMDTYGHDFDRLKTAFVDFCQRLPFYGMAVLCIDDANVREILPRITKPITTYGFDPAAQVRAVDTRFEHGQMRFTVKREGMADLDVTLNQPGLHNVLNALAAIAVATEVGASDAAIVKALAEFHGVGRRFQRYGEHPTKDGGCYWLIDDYGHHPVEMAATLAAARGAFPGRRLVLVFQPHRYSRTRDCFEDFVKVLSETDALVLTEVYPAGEAPIVAADGRALARAVRVAGKVEPVFVENVADVAATVRDLVQADDVVLVMGAGSIGQVAPALGERDAP.

Residue 112-118 participates in ATP binding; that stretch reads GTHGKTT.

Belongs to the MurCDEF family.

It localises to the cytoplasm. It carries out the reaction UDP-N-acetyl-alpha-D-muramate + L-alanine + ATP = UDP-N-acetyl-alpha-D-muramoyl-L-alanine + ADP + phosphate + H(+). The protein operates within cell wall biogenesis; peptidoglycan biosynthesis. Cell wall formation. The sequence is that of UDP-N-acetylmuramate--L-alanine ligase from Thiobacillus denitrificans (strain ATCC 25259 / T1).